The following is a 74-amino-acid chain: MLVFYAPLFVSIFSNTVMGATIDKPIPKPILREAIEKIAVNKRADSRYCKEEKCPPGKHCPKVPIVCVRGPCCF.

The signal sequence occupies residues 1-19 (MLVFYAPLFVSIFSNTVMG). A propeptide spanning residues 20–41 (ATIDKPIPKPILREAIEKIAVN) is cleaved from the precursor.

Belongs to the scoloptoxin-07 family. In terms of processing, contains 3 disulfide bonds. Expressed by the venom gland.

It localises to the secreted. Its function is as follows. Inhibits voltage-gated potassium channels. The sequence is that of Kappa-scoloptoxin(07)-Ssm2c from Scolopendra mutilans (Chinese red-headed centipede).